We begin with the raw amino-acid sequence, 79 residues long: Immunity protein CdiI (79 aa).

Transmembrane regions (helical) follow at residues 12 to 32 and 51 to 71; these read IIFF…IGLI and VVLF…LGLW.

In terms of assembly, probably interacts with cognate toxin CdiA.

The protein localises to the cell inner membrane. Immunity protein component of a toxin-immunity protein module, which functions as a cellular contact-dependent growth inhibition (CDI) system. CDI modules allow bacteria to communicate with and inhibit the growth of closely related neighboring bacteria in a contact-dependent fashion. Protects cells against CdiA from the same strain, its cognate toxin protein. Growth inhibition is reversible upon induction of this protein, occurring about 2.5 hours after induction, and requires an energy source. Does not protect against non-cognate CdiA from E.coli strain 563 / UPEC, D.dadantii strain 3937 or Y.pestis strain CO92. This chain is Immunity protein CdiI, found in Escherichia coli.